Consider the following 129-residue polypeptide: MAFPTTSAQQAETNRKILEEIQTKKQLLAGGIINLGLSPANQMPAPQLLGQPTTVNPDFQAGVGIATNATSTARSAFNPTSSTTLGFFIPQDSYFGNSFIPVLPRLEPLPSPATTPTTPNAPPSHNISK.

The disordered stretch occupies residues R105–K129.

The protein belongs to the SOSS-C family.

This is SOSS complex subunit C homolog from Drosophila erecta (Fruit fly).